The sequence spans 314 residues: Acetaldehyde dehydrogenase 4 (314 aa).

15–18 (SGNI) is an NAD(+) binding site. The active-site Acyl-thioester intermediate is cysteine 133. Residues 164–172 (SAGPGTRAN) and asparagine 292 each bind NAD(+).

It belongs to the acetaldehyde dehydrogenase family.

It catalyses the reaction acetaldehyde + NAD(+) + CoA = acetyl-CoA + NADH + H(+). In Burkholderia lata (strain ATCC 17760 / DSM 23089 / LMG 22485 / NCIMB 9086 / R18194 / 383), this protein is Acetaldehyde dehydrogenase 4.